The following is a 159-amino-acid chain: Heterocyst differentiation protein HetP (159 aa).

The tract at residues 1–50 (MNQNTTGITNYNKAINPQQFDKVVEAILAGKYSWACVLMLRFAGYNPMHY) is required to complement a hetP deletion.

This sequence belongs to the HetP family. As to quaternary structure, in bacterial two-hybrid assays interacts weakly with Asl1930, Alr2902 and Alr3234.

Promotes heterocyst differentiation and commitment when nitrogen is limiting. Interplay between the 4 HetP paralogs controls the timing of commitment to heterocyst formation and its duration. Epistatic analysis show that the 3 paralogs act upstream of hetP to delay commitment (asl1930, alr3234) or inhibit development (alr2902). Asl1930 and Alr3234 must also attenuate the activity of Alr2902. Required for heterocyst formation. Functions directly downstream of master regulator HetR to promote heterocyst differentiation, functioning downstream of patterning (cell choice). Partially functionally redundant with homologs alr2902 and asl1930 but not alr3234. Overexpression leads to more than wild-type levels of heterocysts. Overexpression in the absence of hetR partially bypasses hetR deletion, allowing differentiation of heterocysts, although they only fix nitrogen in the absence of oxygen (a Fox- Fix+ phenotype), suggesting they are not fully. The protein is Heterocyst differentiation protein HetP of Nostoc sp. (strain PCC 7120 / SAG 25.82 / UTEX 2576).